Consider the following 101-residue polypeptide: DNA-binding protein Fis (101 aa).

Residues 77-96 (QTRAANMLGINRGTLRKKLK) constitute a DNA-binding region (H-T-H motif).

It belongs to the transcriptional regulatory Fis family. As to quaternary structure, homodimer.

Functionally, activates ribosomal RNA transcription. Plays a direct role in upstream activation of rRNA promoters. This is DNA-binding protein Fis from Shewanella halifaxensis (strain HAW-EB4).